The sequence spans 576 residues: Arginine--tRNA ligase (576 aa).

Residues Ala-126–His-136 carry the 'HIGH' region motif.

It belongs to the class-I aminoacyl-tRNA synthetase family. As to quaternary structure, monomer.

It localises to the cytoplasm. The enzyme catalyses tRNA(Arg) + L-arginine + ATP = L-arginyl-tRNA(Arg) + AMP + diphosphate. The polypeptide is Arginine--tRNA ligase (Rickettsia canadensis (strain McKiel)).